A 262-amino-acid polypeptide reads, in one-letter code: Carbonic anhydrase 13 (262 aa).

Residues 4 to 261 (LSWGYGEHNG…LKGRRVRASF (258 aa)) enclose the Alpha-carbonic anhydrase domain. His-65 functions as the Proton donor/acceptor in the catalytic mechanism. Residues His-95, His-97, and His-120 each coordinate Zn(2+). Residue 200–201 (TV) participates in substrate binding.

This sequence belongs to the alpha-carbonic anhydrase family. Zn(2+) is required as a cofactor. Expressed in spleen, lung, kidney, heart, brain, skeletal muscle and testis.

The catalysed reaction is hydrogencarbonate + H(+) = CO2 + H2O. Its activity is regulated as follows. Inhibited by coumarins, sulfonamide derivatives such as acetazolamide (AZA) and Foscarnet (phosphonoformate trisodium salt). Functionally, reversible hydration of carbon dioxide. The protein is Carbonic anhydrase 13 (Ca13) of Mus musculus (Mouse).